Here is a 277-residue protein sequence, read N- to C-terminus: Ribosome-inactivating protein luffin-alpha (277 aa).

The signal sequence occupies residues 1–19; sequence MKRFTVLILAIFVAASTVE. The active site involves E179.

This sequence belongs to the ribosome-inactivating protein family. Type 1 RIP subfamily.

The enzyme catalyses Endohydrolysis of the N-glycosidic bond at one specific adenosine on the 28S rRNA.. The sequence is that of Ribosome-inactivating protein luffin-alpha from Luffa aegyptiaca (Sponge gourd).